Consider the following 374-residue polypeptide: 2-oxoglutarate-Fe(II) type oxidoreductase ppzC (374 aa).

The tract at residues 111–130 (KDGPFDSGYRGPGTQRVNPT) is disordered. In terms of domain architecture, Fe2OG dioxygenase spans 220-330 (YPDASLEINF…RVSMPFFWGF (111 aa)). H254, D256, and H311 together coordinate Fe cation. R321 serves as a coordination point for 2-oxoglutarate.

This sequence belongs to the iron/ascorbate-dependent oxidoreductase family. The cofactor is Fe(2+).

The enzyme catalyses peramine + 2-oxoglutarate + O2 = 8-hydroxyperamine + succinate + CO2. The protein operates within secondary metabolite biosynthesis. Its function is as follows. 2-oxoglutarate-Fe(II) type oxidoreductase; part of the gene cluster that mediates the biosynthesis of pyrrolopyrazines, secondary metabolites showing insecticidal activity. Within the pathway, ppzC uses peramine as substrate for hydroxylation to yield the novel analog 8-hydroxyperamine. The single multifunctional NRPS ppzA is sufficient to produce peramine via condensation of 1-pyrroline-5-carboxylate and arginine, N-methylation of the alpha-amino group of arginine and reduction of the thioester and the cyclization to form an iminium ion resulting in release from the peptide synthetase. Deprotonation of this intermediate and oxidation of the pyrroline ring would give rise to peramine. In Epichloe species that produce only peramine, the peramine synthetase gene is not localized in a gene cluster, in contrast to Metarhizium species that contain additional pyrrolopyrazine biosynthesis genes. The 2-oxoglutarate-Fe(II) type oxidoreductase ppzC hydroxylates peramine to yield the newly identified compound 8-hydroxyperamine whereas ppzD converts L-proline into trans-4-hydroxy-L-proline, a precursor of peramine biosynthesis. The protein is 2-oxoglutarate-Fe(II) type oxidoreductase ppzC of Metarhizium rileyi (strain RCEF 4871) (Nomuraea rileyi).